The sequence spans 224 residues: Octanoyltransferase (224 aa).

The BPL/LPL catalytic domain occupies 45–223 (PSNKQAVWML…SLNKRFGLLW (179 aa)). Residues 87–94 (RGGDVTHH), 154–156 (SIG), and 167–169 (GIA) each bind substrate. The Acyl-thioester intermediate role is filled by Cys-185.

Belongs to the LipB family.

The protein resides in the cytoplasm. It carries out the reaction octanoyl-[ACP] + L-lysyl-[protein] = N(6)-octanoyl-L-lysyl-[protein] + holo-[ACP] + H(+). Its pathway is protein modification; protein lipoylation via endogenous pathway; protein N(6)-(lipoyl)lysine from octanoyl-[acyl-carrier-protein]: step 1/2. Catalyzes the transfer of endogenously produced octanoic acid from octanoyl-acyl-carrier-protein onto the lipoyl domains of lipoate-dependent enzymes. Lipoyl-ACP can also act as a substrate although octanoyl-ACP is likely to be the physiological substrate. This is Octanoyltransferase from Prochlorococcus marinus (strain SARG / CCMP1375 / SS120).